We begin with the raw amino-acid sequence, 444 residues long: Vacuolar protein sorting-associated protein 4B (444 aa).

Residues 4–82 enclose the MIT domain; it reads TSPNLQKAID…KEYLKNKEKK (79 aa). Positions 19–82 form a coiled coil; it reads AQEDKAGNYE…KEYLKNKEKK (64 aa). The span at 78 to 88 shows a compositional bias: basic and acidic residues; that stretch reads NKEKKAQKPVK. The tract at residues 78 to 117 is disordered; it reads NKEKKAQKPVKEGQPSPADEKGNDSDGEGESDDPEKKKLQ. Phosphoserine is present on residues Ser-93, Ser-102, and Ser-108. Residue 174–181 coordinates ATP; sequence GPPGTGKS. Residue Ser-410 is modified to Phosphoserine.

Belongs to the AAA ATPase family. In terms of assembly, proposed to be monomeric or homodimeric in nucleotide-free form and to oligomerize upon binding to ATP to form two stacked hexameric or heptameric rings with a central pore through which ESCRT-III substrates are translocated in an ATP-dependent manner. In vitro, associates on the inside of a helical tubular structure formed by a CHMP2A-CHMP3 polymer. Interacts with CHMP1A, CHMP1B, CHMP2A, CHMP4B and CHMP6. Interacts with VPS4A; the interaction suggests a heteromeric assembly with VPS4A. Interacts with VTA1.

It localises to the late endosome membrane. The enzyme catalyses ATP + H2O = ADP + phosphate + H(+). Functionally, involved in late steps of the endosomal multivesicular bodies (MVB) pathway. Recognizes membrane-associated ESCRT-III assemblies and catalyzes their disassembly, possibly in combination with membrane fission. Redistributes the ESCRT-III components to the cytoplasm for further rounds of MVB sorting. MVBs contain intraluminal vesicles (ILVs) that are generated by invagination and scission from the limiting membrane of the endosome and mostly are delivered to lysosomes enabling degradation of membrane proteins, such as stimulated growth factor receptors, lysosomal enzymes and lipids. VPS4A/B are required for the exosomal release of SDCBP, CD63 and syndecan. In terms of biological role, (Microbial infection) In conjunction with the ESCRT machinery also appears to function in topologically equivalent membrane fission events, such as the terminal stages of cytokinesis and enveloped virus budding (lentiviruses). This chain is Vacuolar protein sorting-associated protein 4B (VPS4B), found in Pongo abelii (Sumatran orangutan).